Reading from the N-terminus, the 549-residue chain is Cytoplasmic trehalase (549 aa).

Residues Arg168, Trp175 to Asp176, Asn212, Arg221 to Gln223, Arg292 to Glu294, and Gly324 each bind substrate. Catalysis depends on proton donor/acceptor residues Asp326 and Glu509. Glu525 is a binding site for substrate.

This sequence belongs to the glycosyl hydrolase 37 family. As to quaternary structure, monomer.

Its subcellular location is the cytoplasm. The catalysed reaction is alpha,alpha-trehalose + H2O = alpha-D-glucose + beta-D-glucose. The protein operates within glycan degradation; trehalose degradation; D-glucose from alpha,alpha-trehalose: step 1/1. Hydrolyzes trehalose to glucose. Could be involved, in cells returning to low osmolarity conditions, in the utilization of the accumulated cytoplasmic trehalose, which was synthesized in response to high osmolarity. The sequence is that of Cytoplasmic trehalase from Salmonella typhi.